Consider the following 360-residue polypeptide: GTPase Obg (360 aa).

The 156-residue stretch at 1–156 (MFVDSVEIII…KCVRLELKLI (156 aa)) folds into the Obg domain. One can recognise an OBG-type G domain in the interval 157–360 (ADIGLVGFPN…LKFVLLKALQ (204 aa)). GTP is bound by residues 163–170 (GFPNAGKS), 188–192 (FTTLV), 210–213 (DIPG), 279–282 (NKCD), and 341–343 (SAV). Positions 170 and 190 each coordinate Mg(2+).

It belongs to the TRAFAC class OBG-HflX-like GTPase superfamily. OBG GTPase family. As to quaternary structure, monomer. It depends on Mg(2+) as a cofactor.

It is found in the cytoplasm. In terms of biological role, an essential GTPase which binds GTP, GDP and possibly (p)ppGpp with moderate affinity, with high nucleotide exchange rates and a fairly low GTP hydrolysis rate. Plays a role in control of the cell cycle, stress response, ribosome biogenesis and in those bacteria that undergo differentiation, in morphogenesis control. The polypeptide is GTPase Obg (Helicobacter pylori (strain P12)).